Consider the following 215-residue polypeptide: Large ribosomal subunit protein uL3 (215 aa).

A disordered region spans residues 136-155 (GVSISHRSHGSTGQRQDPGK). Position 151 is an N5-methylglutamine (Gln-151).

The protein belongs to the universal ribosomal protein uL3 family. Part of the 50S ribosomal subunit. Forms a cluster with proteins L14 and L19. In terms of processing, methylated by PrmB.

Its function is as follows. One of the primary rRNA binding proteins, it binds directly near the 3'-end of the 23S rRNA, where it nucleates assembly of the 50S subunit. This chain is Large ribosomal subunit protein uL3, found in Rickettsia typhi (strain ATCC VR-144 / Wilmington).